The primary structure comprises 430 residues: Inactive metallocarboxypeptidase ECM14 (430 aa).

A signal peptide spans 1–24 (MLHMNSLWGCFLFVLLAVTGAVQG). A propeptide spanning residues 25-105 (LQEDYSEYAV…TLPTSQMMAR (81 aa)) is cleaved from the precursor. The N-linked (GlcNAc...) asparagine glycan is linked to Asn-41. A Peptidase M14 domain is found at 120–425 (EYRDLDTIYM…AALKYFCDFL (306 aa)). Zn(2+)-binding residues include His-182 and Glu-185. Substrate contacts are provided by residues 182-185 (HARE), Arg-240, and 257-258 (DH). Cysteines 251 and 272 form a disulfide. Asn-295 carries an N-linked (GlcNAc...) asparagine glycan. His-310 lines the Zn(2+) pocket. 311 to 312 (SY) lines the substrate pocket.

It belongs to the peptidase M14 family. The cofactor is Zn(2+). N-glycosylated.

The protein localises to the vacuole. It is found in the secreted. Functionally, inactive carboxypeptidase that may play a role in cell wall organization and biogenesis. This is Inactive metallocarboxypeptidase ECM14 from Saccharomyces cerevisiae (strain ATCC 204508 / S288c) (Baker's yeast).